We begin with the raw amino-acid sequence, 220 residues long: Adenylate kinase (220 aa).

10–15 (GAGKGT) serves as a coordination point for ATP. The tract at residues 30–59 (STGDMLRAAVKNCTPLGLKAKEIMDAGGLV) is NMP. AMP is bound by residues Thr-31, Arg-36, 57 to 59 (GLV), 85 to 88 (GFPR), and Gln-92. The tract at residues 126-163 (GRRTCPSCGKGFHVLFAPPRKAGVCDFCGADLVQRGDD) is LID. Arg-127 provides a ligand contact to ATP. The Zn(2+) site is built by Cys-130, Cys-133, Cys-150, and Cys-153. AMP is bound by residues Arg-160 and Arg-171. Leu-199 is an ATP binding site.

Belongs to the adenylate kinase family. As to quaternary structure, monomer.

It is found in the cytoplasm. It catalyses the reaction AMP + ATP = 2 ADP. It participates in purine metabolism; AMP biosynthesis via salvage pathway; AMP from ADP: step 1/1. Its function is as follows. Catalyzes the reversible transfer of the terminal phosphate group between ATP and AMP. Plays an important role in cellular energy homeostasis and in adenine nucleotide metabolism. In Pelobacter propionicus (strain DSM 2379 / NBRC 103807 / OttBd1), this protein is Adenylate kinase.